A 199-amino-acid polypeptide reads, in one-letter code: MTLVPMVVEQTSRGERAYDIYSRLLKERIIFITGPIEDQMASLIVAQLIFLESENPEKEICMYINSPGGVVTAGLSIYDTMQYIKPKVSTLCLGQAASMGSLLLAAGEPGMRYALPNSRIMIHQPSGGFQGQATDIEIHAKEILDIKGRLNDIYVKHTGRDLSEVVANMERDNFMRAEKAKDFGIIDKVIEKRLDIGVE.

Catalysis depends on serine 98, which acts as the Nucleophile. Histidine 123 is a catalytic residue.

This sequence belongs to the peptidase S14 family. In terms of assembly, fourteen ClpP subunits assemble into 2 heptameric rings which stack back to back to give a disk-like structure with a central cavity, resembling the structure of eukaryotic proteasomes.

The protein resides in the cytoplasm. It catalyses the reaction Hydrolysis of proteins to small peptides in the presence of ATP and magnesium. alpha-casein is the usual test substrate. In the absence of ATP, only oligopeptides shorter than five residues are hydrolyzed (such as succinyl-Leu-Tyr-|-NHMec, and Leu-Tyr-Leu-|-Tyr-Trp, in which cleavage of the -Tyr-|-Leu- and -Tyr-|-Trp bonds also occurs).. Cleaves peptides in various proteins in a process that requires ATP hydrolysis. Has a chymotrypsin-like activity. Plays a major role in the degradation of misfolded proteins. The polypeptide is ATP-dependent Clp protease proteolytic subunit (Ehrlichia chaffeensis (strain ATCC CRL-10679 / Arkansas)).